The primary structure comprises 345 residues: Tubulin-folding cofactor C (345 aa).

Met-1 carries the post-translational modification N-acetylmethionine. Positions 1–10 (MEDDGQSSVA) are enriched in polar residues. The tract at residues 1-83 (MEDDGQSSVA…SRLASSSTDS (83 aa)) is disordered. The span at 23-39 (DMLERLSARHQARKSDS) shows a compositional bias: basic and acidic residues. Over residues 40 to 55 (PDSSSSSSSTLESTSS) the composition is skewed to low complexity. Basic and acidic residues predominate over residues 61–73 (SDSKRSIESRIAE). The segment covering 74–83 (SRLASSSTDS) has biased composition (low complexity). The C-CAP/cofactor C-like domain occupies 169-318 (PPKLVPVRDS…NWANVDDFRW (150 aa)).

Belongs to the TBCC family. Supercomplex made of cofactors A to E. Cofactors A and D function by capturing and stabilizing tubulin in a quasi-native conformation. Cofactor E binds to the cofactor D-tubulin complex; interaction with cofactor C then causes the release of tubulin polypeptides that are committed to the native state. As to expression, ubiquitously expressed (at protein level). Present in leaves, roots, flowers, and stems.

Its subcellular location is the cytoplasm. Its function is as follows. Essential tubulin-folding protein involved in the final step of the tubulin folding pathway. Required for continuous microtubule cytoskeleton organization, mitotic division, cytokinesis, and to couple cell cycle progression to cell division in embryos and endosperms. Not essential for cell viability. Binds probably to the multimeric supercomplex, stimulating GTP hydrolysis by the bound beta-tubulin and the release of the alpha-/beta-tubulin heterodimer. This Arabidopsis thaliana (Mouse-ear cress) protein is Tubulin-folding cofactor C (TFCC).